Consider the following 94-residue polypeptide: Potassium channel protein kcv (94 aa).

A helical membrane pass occupies residues Phe-14–Gly-34. Asn-38 carries N-linked (GlcNAc...) asparagine; by host glycosylation. Residues Thr-74–Leu-94 form a helical membrane-spanning segment.

Belongs to the two pore domain potassium channel (TC 1.A.1.12) family.

It localises to the membrane. Potassium-selective channel essential in the virus replication cycle. May be involved in preventing multiple infections (Potential). The chain is Potassium channel protein kcv (A250R) from Paramecium bursaria Chlorella virus 1 (PBCV-1).